The following is a 522-amino-acid chain: Calcium-dependent protein kinase 4 (522 aa).

Polar residues predominate over residues 1–10 (MGACFSSHTA). A disordered region spans residues 1–43 (MGACFSSHTATAAADGGSGKRQQRKGDHKGKLPDGGGGEKEKE). Residue Gly2 is the site of N-myristoyl glycine attachment. Positions 29-43 (KGKLPDGGGGEKEKE) are enriched in basic and acidic residues. One can recognise a Protein kinase domain in the interval 59–319 (YQVGRLLGHG…AAQALSHPWV (261 aa)). ATP is bound by residues 65–73 (LGHGQFGYT) and Lys88. The active-site Proton acceptor is the Asp185. The autoinhibitory domain stretch occupies residues 325–355 (ASEIPVDISVLSNMRQFVKYSRFKQFALRAL). EF-hand domains follow at residues 362–397 (EELA…DLPW), 399–434 (LKGP…IHQM), 441–476 (RWGL…GLKG), and 481–508 (LLEE…ASMS). Ca(2+) contacts are provided by Asp375, Asp377, Ser379, Ser381, Glu386, Asp412, Asn414, Asp416, Glu423, Asp454, Asp456, Asp458, Tyr460, Glu465, Asp486, Asp488, Asp490, Arg492, and Glu497.

The protein belongs to the protein kinase superfamily. Ser/Thr protein kinase family. CDPK subfamily.

The protein resides in the membrane. The enzyme catalyses L-seryl-[protein] + ATP = O-phospho-L-seryl-[protein] + ADP + H(+). The catalysed reaction is L-threonyl-[protein] + ATP = O-phospho-L-threonyl-[protein] + ADP + H(+). With respect to regulation, activated by calcium. Autophosphorylation may play an important role in the regulation of the kinase activity. Its function is as follows. May play a role in signal transduction pathways that involve calcium as a second messenger. The protein is Calcium-dependent protein kinase 4 of Oryza sativa subsp. japonica (Rice).